A 211-amino-acid polypeptide reads, in one-letter code: Dephospho-CoA kinase (211 aa).

One can recognise a DPCK domain in the interval 3–206 (VLGLTGGIGS…PGMKGPDPHA (204 aa)). 11-16 (GSGKSI) lines the ATP pocket.

The protein belongs to the CoaE family.

The protein localises to the cytoplasm. The catalysed reaction is 3'-dephospho-CoA + ATP = ADP + CoA + H(+). The protein operates within cofactor biosynthesis; coenzyme A biosynthesis; CoA from (R)-pantothenate: step 5/5. Catalyzes the phosphorylation of the 3'-hydroxyl group of dephosphocoenzyme A to form coenzyme A. This is Dephospho-CoA kinase from Syntrophotalea carbinolica (strain DSM 2380 / NBRC 103641 / GraBd1) (Pelobacter carbinolicus).